The sequence spans 801 residues: Probable phosphoketolase (801 aa).

Belongs to the XFP family. It depends on thiamine diphosphate as a cofactor.

The sequence is that of Probable phosphoketolase from Bradyrhizobium diazoefficiens (strain JCM 10833 / BCRC 13528 / IAM 13628 / NBRC 14792 / USDA 110).